Consider the following 418-residue polypeptide: Glutamyl-tRNA(Gln) amidotransferase subunit D (418 aa).

The Asparaginase/glutaminase domain occupies 81–407 (PDVKIISTGG…EEAKEMVKKS (327 aa)). Catalysis depends on residues T91, T166, D167, and K243.

Belongs to the asparaginase 1 family. GatD subfamily. In terms of assembly, heterodimer of GatD and GatE.

The catalysed reaction is L-glutamyl-tRNA(Gln) + L-glutamine + ATP + H2O = L-glutaminyl-tRNA(Gln) + L-glutamate + ADP + phosphate + H(+). Its function is as follows. Allows the formation of correctly charged Gln-tRNA(Gln) through the transamidation of misacylated Glu-tRNA(Gln) in organisms which lack glutaminyl-tRNA synthetase. The reaction takes place in the presence of glutamine and ATP through an activated gamma-phospho-Glu-tRNA(Gln). The GatDE system is specific for glutamate and does not act on aspartate. The protein is Glutamyl-tRNA(Gln) amidotransferase subunit D of Archaeoglobus fulgidus (strain ATCC 49558 / DSM 4304 / JCM 9628 / NBRC 100126 / VC-16).